The chain runs to 88 residues: MLSRLFTVPAILLATLGSAATLAPREESACQRVCCDALVQSTSRGLVGINCNRGGIDCGFSGQIASCCAAIVPVGARQGTGVQCQRGN.

The first 21 residues, 1–21 (MLSRLFTVPAILLATLGSAAT), serve as a signal peptide directing secretion. Intrachain disulfides connect cysteine 30–cysteine 67, cysteine 34–cysteine 58, cysteine 35–cysteine 51, and cysteine 68–cysteine 84.

This sequence belongs to the fungal hydrophobin family.

The protein resides in the secreted. It localises to the cell wall. It is found in the vacuole. Its subcellular location is the cytoplasmic vesicle. Functionally, aerial growth, conidiation, and dispersal of filamentous fungi in the environment rely upon a capability of their secreting small amphipathic proteins called hydrophobins (HPBs) with low sequence identity. Class I can self-assemble into an outermost layer of rodlet bundles on aerial cell surfaces, conferring cellular hydrophobicity that supports fungal growth, development and dispersal; whereas Class II form highly ordered films at water-air interfaces through intermolecular interactions but contribute nothing to the rodlet structure. Hyd1F contributes to certain cell wall-related features, such as hydrophobicity but is not involved in cell wall-related events during fungal proliferation in host hemocoel. Does not contribute to conidial hydrophobicity. In Beauveria bassiana (strain ARSEF 2860) (White muscardine disease fungus), this protein is Class I hydrophobin F.